The sequence spans 558 residues: Formate--tetrahydrofolate ligase (558 aa).

Thr-65 to Thr-72 lines the ATP pocket.

Belongs to the formate--tetrahydrofolate ligase family.

It carries out the reaction (6S)-5,6,7,8-tetrahydrofolate + formate + ATP = (6R)-10-formyltetrahydrofolate + ADP + phosphate. It functions in the pathway one-carbon metabolism; tetrahydrofolate interconversion. In Methylobacterium nodulans (strain LMG 21967 / CNCM I-2342 / ORS 2060), this protein is Formate--tetrahydrofolate ligase.